Here is a 112-residue protein sequence, read N- to C-terminus: uncharacterized protein (112 aa).

Asn29 and Asn60 each carry an N-linked (GlcNAc...) asparagine; by host glycan. The helical transmembrane segment at 66 to 86 threads the bilayer; it reads IFNGLGFILIVIFIYLLLITL.

It belongs to the asfivirus B117L family.

The protein resides in the host membrane. It is found in the virion. This is an uncharacterized protein from Ornithodoros (relapsing fever ticks).